The primary structure comprises 293 residues: Rhomboid-like protease 1 (293 aa).

A disordered region spans residues 18-40 (EHTPLYNAETGSRDSDSTSSGGA). 6 helical membrane passes run 62–82 (VVLAISIVDWIFYIVTVCLDT), 112–132 (LLLPVFLHANFFHVFFNVFFQ), 148–168 (FTGLYFASAIYGNLLSATAFF), 174–194 (VGASTAGFGLIGIQICEMALT), 217–237 (LLMFTLNGGSIDQMGHLGGLL), and 262–282 (AAAIGILLALPAACFPILYAV). Serine 177 acts as the Nucleophile in catalysis. Histidine 232 is a catalytic residue.

The protein belongs to the peptidase S54 family.

The protein resides in the cytoplasmic vesicle. Its subcellular location is the secretory vesicle. It is found in the microneme membrane. The enzyme catalyses Cleaves type-1 transmembrane domains using a catalytic dyad composed of serine and histidine that are contributed by different transmembrane domains.. Serine protease involved in intramembrane proteolysis and the subsequent release of polypeptides from their membrane anchors. Has no detectable activity towards MIC2. The sequence is that of Rhomboid-like protease 1 (ROM1) from Toxoplasma gondii.